We begin with the raw amino-acid sequence, 1902 residues long: PII-type proteinase (1902 aa).

The signal sequence occupies residues 1–33 (MQRKKKGLSILLAGTVALGALAVLPVGEIQAKA). Positions 34 to 187 (AISQQTKGSS…VTLAKVYYPT (154 aa)) are excised as a propeptide. One can recognise a Peptidase S8 domain in the interval 191 to 697 (ANSMANVQAV…AGLVDVKAAI (507 aa)). Residues D217, H281, and S620 each act as charge relay system in the active site. The tract at residues 1796–1874 (GKGDGTTGTS…GALPKTGETT (79 aa)) is disordered. A compositionally biased stretch (gly residues) spans 1797–1812 (KGDGTTGTSDKGGGQG). Over residues 1830-1843 (SQPSSGGNIPTNPA) the composition is skewed to polar residues. The LPXTG sorting signal signature appears at 1867–1871 (LPKTG). T1870 carries the pentaglycyl murein peptidoglycan amidated threonine modification. The propeptide at 1871–1902 (GETTERPAFGFLGVIVVSLMGVLGLKRKQREE) is removed by sortase.

Belongs to the peptidase S8 family.

The protein localises to the secreted. Its subcellular location is the cell wall. The catalysed reaction is Endopeptidase activity with very broad specificity, although some subsite preference have been noted, e.g. large hydrophobic residues in the P1 and P4 positions, and Pro in the P2 position. Best known for its action on caseins, although it has been shown to hydrolyze hemoglobin and oxidized insulin B-chain.. Protease which breaks down milk proteins during the growth of the bacteria on milk. This is PII-type proteinase (prt) from Lactococcus lactis subsp. cremoris (Streptococcus cremoris).